Here is a 234-residue protein sequence, read N- to C-terminus: Small ribosomal subunit protein uS3 (234 aa).

The region spanning 39–107 (IRKFLKKELY…EVSINIKEVK (69 aa)) is the KH type-2 domain.

Belongs to the universal ribosomal protein uS3 family. Part of the 30S ribosomal subunit. Forms a tight complex with proteins S10 and S14.

Its function is as follows. Binds the lower part of the 30S subunit head. Binds mRNA in the 70S ribosome, positioning it for translation. The polypeptide is Small ribosomal subunit protein uS3 (Helicobacter pylori (strain P12)).